The sequence spans 139 residues: Ribonuclease P protein component (139 aa).

This sequence belongs to the RnpA family. In terms of assembly, consists of a catalytic RNA component (M1 or rnpB) and a protein subunit.

The catalysed reaction is Endonucleolytic cleavage of RNA, removing 5'-extranucleotides from tRNA precursor.. RNaseP catalyzes the removal of the 5'-leader sequence from pre-tRNA to produce the mature 5'-terminus. It can also cleave other RNA substrates such as 4.5S RNA. The protein component plays an auxiliary but essential role in vivo by binding to the 5'-leader sequence and broadening the substrate specificity of the ribozyme. This Paraburkholderia xenovorans (strain LB400) protein is Ribonuclease P protein component.